Reading from the N-terminus, the 432-residue chain is Transcriptional adapter 3-A (432 aa).

Disordered regions lie at residues 90 to 127 (HELGTPIKHSKPKKQKLDGKVSHASGPGPGRPKSRNMQ) and 275 to 314 (SPVEDSPIPEISGKESGTDGASTSPRSQNKPFSAPHTKSL). Residues 293 to 305 (DGASTSPRSQNKP) are compositionally biased toward polar residues. The stretch at 335–398 (ADDSEDEVLA…NEVMDAFRKI (64 aa)) forms a coiled coil.

This sequence belongs to the NGG1 family.

Its subcellular location is the nucleus. In terms of biological role, functions as a component of the PCAF complex. The PCAF complex is capable of efficiently acetylating histones in a nucleosomal context. In Xenopus laevis (African clawed frog), this protein is Transcriptional adapter 3-A (tada3-a).